A 238-amino-acid polypeptide reads, in one-letter code: Synapse differentiation-inducing gene protein 1-like (238 aa).

Disordered stretches follow at residues 1 to 24 (MESLSELQNPLLPRSPTHLHGPYP), 78 to 111 (KVKEPRPGSCETSFTEGREPPAGPTERSTEPGQA), and 126 to 155 (EEFQGQEGDPEEEESDATSTESESEDNFLT). The Extracellular portion of the chain corresponds to 1–162 (MESLSELQNP…FLTLPPRDHL (162 aa)). Residues 133–151 (GDPEEEESDATSTESESED) are compositionally biased toward acidic residues. A helical membrane pass occupies residues 163-183 (GLTIFSMLCCFWPLGIAAFYF). Over 184 to 205 (SQGTSKAISKGDFRLANTTSRR) the chain is Cytoplasmic. The chain crosses the membrane as a helical span at residues 206–226 (ALFLATLSIAVGAGLYVAVVV). Over 227–238 (ALAAYMSQNGHS) the chain is Extracellular.

It belongs to the CD225/Dispanin family.

The protein localises to the membrane. It is found in the golgi apparatus. Its subcellular location is the cis-Golgi network. The protein is Synapse differentiation-inducing gene protein 1-like (SYNDIG1L) of Bos taurus (Bovine).